The following is a 434-amino-acid chain: Trigger factor (434 aa).

Residues 160–245 (GDKVKMNFVG…LTEVQAANLP (86 aa)) enclose the PPIase FKBP-type domain.

The protein belongs to the FKBP-type PPIase family. Tig subfamily.

Its subcellular location is the cytoplasm. It catalyses the reaction [protein]-peptidylproline (omega=180) = [protein]-peptidylproline (omega=0). Its function is as follows. Involved in protein export. Acts as a chaperone by maintaining the newly synthesized protein in an open conformation. Functions as a peptidyl-prolyl cis-trans isomerase. The protein is Trigger factor of Shewanella baltica (strain OS223).